The sequence spans 120 residues: Large ribosomal subunit protein uL18 (120 aa).

This sequence belongs to the universal ribosomal protein uL18 family. Part of the 50S ribosomal subunit; part of the 5S rRNA/L5/L18/L25 subcomplex. Contacts the 5S and 23S rRNAs.

This is one of the proteins that bind and probably mediate the attachment of the 5S RNA into the large ribosomal subunit, where it forms part of the central protuberance. This Agrobacterium fabrum (strain C58 / ATCC 33970) (Agrobacterium tumefaciens (strain C58)) protein is Large ribosomal subunit protein uL18.